A 419-amino-acid chain; its full sequence is Tyrosine--tRNA ligase (419 aa).

An L-tyrosine-binding site is contributed by tyrosine 42. The 'HIGH' region motif lies at alanine 47 to serine 56. Residues tyrosine 179 and glutamine 183 each coordinate L-tyrosine. Positions lysine 239–threonine 243 match the 'KMSKS' region motif. An ATP-binding site is contributed by lysine 242. In terms of domain architecture, S4 RNA-binding spans isoleucine 353–proline 418.

Belongs to the class-I aminoacyl-tRNA synthetase family. TyrS type 1 subfamily. Homodimer.

It localises to the cytoplasm. The enzyme catalyses tRNA(Tyr) + L-tyrosine + ATP = L-tyrosyl-tRNA(Tyr) + AMP + diphosphate + H(+). Functionally, catalyzes the attachment of tyrosine to tRNA(Tyr) in a two-step reaction: tyrosine is first activated by ATP to form Tyr-AMP and then transferred to the acceptor end of tRNA(Tyr). This Caulobacter sp. (strain K31) protein is Tyrosine--tRNA ligase.